The following is a 116-amino-acid chain: NADH-ubiquinone oxidoreductase chain 3 (116 aa).

Helical transmembrane passes span 3-23, 56-76, and 85-105; these read LITT…TVSF, FFLI…LLPL, and PALT…GLIY.

It belongs to the complex I subunit 3 family.

The protein resides in the mitochondrion membrane. The catalysed reaction is a ubiquinone + NADH + 5 H(+)(in) = a ubiquinol + NAD(+) + 4 H(+)(out). Functionally, core subunit of the mitochondrial membrane respiratory chain NADH dehydrogenase (Complex I) that is believed to belong to the minimal assembly required for catalysis. Complex I functions in the transfer of electrons from NADH to the respiratory chain. The immediate electron acceptor for the enzyme is believed to be ubiquinone. The sequence is that of NADH-ubiquinone oxidoreductase chain 3 (MT-ND3) from Salmo trutta (Brown trout).